Consider the following 438-residue polypeptide: Adenylosuccinate synthetase (438 aa).

Residues 13–19 (GDEGKGK) and 41–43 (GHT) contribute to the GTP site. The Proton acceptor role is filled by D14. The Mg(2+) site is built by D14 and G41. Residues 14-17 (DEGK), 39-42 (NAGH), T130, R144, Q225, T240, and R310 each bind IMP. H42 acts as the Proton donor in catalysis. Residue 306–312 (ATTGRLR) coordinates substrate. GTP is bound by residues R312, 338 to 340 (KLD), and 421 to 423 (STG).

Belongs to the adenylosuccinate synthetase family. In terms of assembly, homodimer. It depends on Mg(2+) as a cofactor.

The protein localises to the cytoplasm. It carries out the reaction IMP + L-aspartate + GTP = N(6)-(1,2-dicarboxyethyl)-AMP + GDP + phosphate + 2 H(+). The protein operates within purine metabolism; AMP biosynthesis via de novo pathway; AMP from IMP: step 1/2. Plays an important role in the de novo pathway of purine nucleotide biosynthesis. Catalyzes the first committed step in the biosynthesis of AMP from IMP. In Vibrio vulnificus (strain YJ016), this protein is Adenylosuccinate synthetase.